A 196-amino-acid polypeptide reads, in one-letter code: tRNA (pseudouridine(54)-N(1))-methyltransferase (196 aa).

L126 provides a ligand contact to S-adenosyl-L-methionine.

This sequence belongs to the methyltransferase superfamily. TrmY family. In terms of assembly, homodimer.

It is found in the cytoplasm. It carries out the reaction pseudouridine(54) in tRNA + S-adenosyl-L-methionine = N(1)-methylpseudouridine(54) in tRNA + S-adenosyl-L-homocysteine + H(+). Functionally, specifically catalyzes the N1-methylation of pseudouridine at position 54 (Psi54) in tRNAs. The sequence is that of tRNA (pseudouridine(54)-N(1))-methyltransferase from Halobacterium salinarum (strain ATCC 700922 / JCM 11081 / NRC-1) (Halobacterium halobium).